Consider the following 671-residue polypeptide: DEAD-box ATP-dependent RNA helicase 7 (671 aa).

A disordered region spans residues 1–84; it reads MPSLMLSDKK…EKKKSSKKVK (84 aa). Over residues 26–41 the composition is skewed to basic and acidic residues; it reads LDSKKGKKEQKLKLSD. Residues serine 40 and serine 42 each carry the phosphoserine modification. Over residues 50–60 the composition is skewed to basic residues; it reads KKSKKKDKKRK. The Q motif motif lies at 96 to 124; it reads NAVSKFRISAPLREKLKANGIEALFPIQA. The 183-residue stretch at 127–309 folds into the Helicase ATP-binding domain; the sequence is FDMVLDGADL…NRFLKRDQKT (183 aa). 140 to 147 provides a ligand contact to ATP; sequence ARTGQGKT. The DEAD box signature appears at 255 to 258; the sequence is DEAD. Residues 339–479 enclose the Helicase C-terminal domain; the sequence is LIPDIISCYS…HLAAPQPDEI (141 aa). The segment at 627–671 is disordered; that stretch reads EREPLPQKRFGGGGRGNRFGGGGGNRFGGGGGRGRGGSGGRGQRY. The segment covering 636–671 has biased composition (gly residues); that stretch reads FGGGGRGNRFGGGGGNRFGGGGGRGRGGSGGRGQRY.

The protein belongs to the DEAD box helicase family. DDX21/DDX50 subfamily.

It is found in the nucleus. It carries out the reaction ATP + H2O = ADP + phosphate + H(+). The polypeptide is DEAD-box ATP-dependent RNA helicase 7 (RH7) (Arabidopsis thaliana (Mouse-ear cress)).